Here is an 88-residue protein sequence, read N- to C-terminus: Small ribosomal subunit protein bS20 (88 aa).

This sequence belongs to the bacterial ribosomal protein bS20 family.

In terms of biological role, binds directly to 16S ribosomal RNA. The protein is Small ribosomal subunit protein bS20 of Bartonella quintana (strain Toulouse) (Rochalimaea quintana).